The sequence spans 389 residues: Lipopolysaccharide assembly protein B (389 aa).

Residues 1–20 (MLELLFLLLPVAAAYGWYMG) form a helical membrane-spanning segment. The Cytoplasmic segment spans residues 21–389 (RRSAQQNKQD…IKPIRGLDGL (369 aa)). TPR repeat units lie at residues 35–68 (LSRD…DTGT), 69–102 (VEAH…ASLT), 107–140 (LLAI…TDFR), 142–174 (GALQ…GKDK), 180–213 (AHFY…DKNS), 214–247 (ARVS…DREL), and 249–282 (SETL…NTGA). 4 residues coordinate Fe cation: Cys357, Cys360, Cys371, and Cys374.

This sequence belongs to the LapB family.

The protein resides in the cell inner membrane. Its function is as follows. Modulates cellular lipopolysaccharide (LPS) levels by regulating LpxC, which is involved in lipid A biosynthesis. May act by modulating the proteolytic activity of FtsH towards LpxC. May also coordinate assembly of proteins involved in LPS synthesis at the plasma membrane. The protein is Lipopolysaccharide assembly protein B of Escherichia coli O157:H7.